A 275-amino-acid polypeptide reads, in one-letter code: Large ribosomal subunit protein uL2 (275 aa).

Over residues R28–S38 the composition is skewed to basic and acidic residues. Disordered stretches follow at residues R28–H53 and G222–K275. Positions K254 to K275 are enriched in basic residues.

It belongs to the universal ribosomal protein uL2 family. Part of the 50S ribosomal subunit. Forms a bridge to the 30S subunit in the 70S ribosome.

Functionally, one of the primary rRNA binding proteins. Required for association of the 30S and 50S subunits to form the 70S ribosome, for tRNA binding and peptide bond formation. It has been suggested to have peptidyltransferase activity; this is somewhat controversial. Makes several contacts with the 16S rRNA in the 70S ribosome. The polypeptide is Large ribosomal subunit protein uL2 (Marinobacter nauticus (strain ATCC 700491 / DSM 11845 / VT8) (Marinobacter aquaeolei)).